The sequence spans 115 residues: Ig heavy chain V region PJ14 (115 aa).

The signal sequence occupies residues 1 to 19; it reads MAVLALLFCLVTFPSCILS. An Ig-like domain is found at 20-115; the sequence is QVQLKESGPG…TDDTARYYCA (96 aa).

The protein is Ig heavy chain V region PJ14 of Mus musculus (Mouse).